The sequence spans 105 residues: Heat shock protein HspQ (105 aa).

The segment at 77–105 (MRDEHPEQPSMDELARTIRKQLQAPRLRN) is disordered.

Belongs to the HspQ family.

It localises to the cytoplasm. Involved in the degradation of certain denaturated proteins, including DnaA, during heat shock stress. The sequence is that of Heat shock protein HspQ from Salmonella arizonae (strain ATCC BAA-731 / CDC346-86 / RSK2980).